The chain runs to 296 residues: 2-dehydropantoate 2-reductase (296 aa).

Residues 7–12 (GPGAVG), asparagine 94, and alanine 120 each bind NADP(+). Position 94 (asparagine 94) interacts with substrate. The active-site Proton donor is the lysine 175. Substrate is bound by residues asparagine 179, asparagine 183, asparagine 193, and serine 245. Residue glutamate 257 participates in NADP(+) binding.

Belongs to the ketopantoate reductase family.

Its subcellular location is the cytoplasm. It carries out the reaction (R)-pantoate + NADP(+) = 2-dehydropantoate + NADPH + H(+). The protein operates within cofactor biosynthesis; (R)-pantothenate biosynthesis; (R)-pantoate from 3-methyl-2-oxobutanoate: step 2/2. Its function is as follows. Catalyzes the NADPH-dependent reduction of ketopantoate into pantoic acid. This Vibrio cholerae serotype O1 (strain ATCC 39315 / El Tor Inaba N16961) protein is 2-dehydropantoate 2-reductase (panE).